The following is an 89-amino-acid chain: Large ribosomal subunit protein bL27 (89 aa).

Positions 1–26 are disordered; the sequence is MAHKKAGGSSRNGRDSAGQRRGVKRF.

The protein belongs to the bacterial ribosomal protein bL27 family.

The chain is Large ribosomal subunit protein bL27 from Nitratidesulfovibrio vulgaris (strain DSM 19637 / Miyazaki F) (Desulfovibrio vulgaris).